A 43-amino-acid chain; its full sequence is Protein PsbN (43 aa).

The helical transmembrane segment at 5 to 27 (TLVTISISCLLVSFTGYALYTAF) threads the bilayer.

It belongs to the PsbN family.

It localises to the plastid. It is found in the chloroplast thylakoid membrane. Functionally, may play a role in photosystem I and II biogenesis. The protein is Protein PsbN of Pinus koraiensis (Korean pine).